The primary structure comprises 665 residues: Protein phosphatase 1 regulatory subunit 21 (665 aa).

Coiled-coil stretches lie at residues Met-1–Lys-84, Leu-125–Gln-206, Glu-426–Val-477, and Lys-586–Leu-627.

Component of the FERRY complex.

The protein localises to the early endosome. Component of the FERRY complex (Five-subunit Endosomal Rab5 and RNA/ribosome intermediary). The FERRY complex directly interacts with mRNAs and RAB5A, and functions as a RAB5A effector involved in the localization and the distribution of specific mRNAs most likely by mediating their endosomal transport. The complex recruits mRNAs and ribosomes to early endosomes through direct mRNA-interaction. Putative regulator of protein phosphatase 1 (PP1) activity. May play a role in the endosomal sorting process or in endosome maturation pathway. This is Protein phosphatase 1 regulatory subunit 21 (ppp1r21) from Danio rerio (Zebrafish).